We begin with the raw amino-acid sequence, 368 residues long: tRNA-cytidine(32) 2-sulfurtransferase (368 aa).

A PP-loop motif motif is present at residues 95–100 (SGGKDS). Residues cysteine 170, cysteine 173, and cysteine 261 each coordinate [4Fe-4S] cluster.

The protein belongs to the TtcA family. Homodimer. Requires Mg(2+) as cofactor. [4Fe-4S] cluster serves as cofactor.

It is found in the cytoplasm. The catalysed reaction is cytidine(32) in tRNA + S-sulfanyl-L-cysteinyl-[cysteine desulfurase] + AH2 + ATP = 2-thiocytidine(32) in tRNA + L-cysteinyl-[cysteine desulfurase] + A + AMP + diphosphate + H(+). It participates in tRNA modification. Its function is as follows. Catalyzes the ATP-dependent 2-thiolation of cytidine in position 32 of tRNA, to form 2-thiocytidine (s(2)C32). The sulfur atoms are provided by the cysteine/cysteine desulfurase (IscS) system. In Psychrobacter sp. (strain PRwf-1), this protein is tRNA-cytidine(32) 2-sulfurtransferase.